Here is a 316-residue protein sequence, read N- to C-terminus: DNA-directed RNA polymerase subunit alpha (316 aa).

The tract at residues 1 to 230 is alpha N-terminal domain (alpha-NTD); sequence MIEFEKPNIH…EHLAMFVDLT (230 aa). Residues 247-316 form an alpha C-terminal domain (alpha-CTD) region; the sequence is KEKMLEMTIE…DLGLSLRKED (70 aa).

It belongs to the RNA polymerase alpha chain family. Homodimer. The RNAP catalytic core consists of 2 alpha, 1 beta, 1 beta' and 1 omega subunit. When a sigma factor is associated with the core the holoenzyme is formed, which can initiate transcription.

The catalysed reaction is RNA(n) + a ribonucleoside 5'-triphosphate = RNA(n+1) + diphosphate. Functionally, DNA-dependent RNA polymerase catalyzes the transcription of DNA into RNA using the four ribonucleoside triphosphates as substrates. The chain is DNA-directed RNA polymerase subunit alpha from Levilactobacillus brevis (strain ATCC 367 / BCRC 12310 / CIP 105137 / JCM 1170 / LMG 11437 / NCIMB 947 / NCTC 947) (Lactobacillus brevis).